The following is a 358-amino-acid chain: DnaJ homolog subfamily B member 11 (358 aa).

An N-terminal signal peptide occupies residues 1-22 (MAPQNLGTFCLLLLYLIGTVIA). Positions 25 to 90 (DFYKILGVPR…EKRKQYDTYG (66 aa)) constitute a J domain. Thr188 is subject to Phosphothreonine. A glycan (N-linked (GlcNAc...) asparagine) is linked at Asn261.

Part of a large chaperone multiprotein complex comprising DNAJB11, HSP90B1, HSPA5, HYOU, PDIA2, PDIA4, PDIA6, PPIB, SDF2L1, UGGT1 and very small amounts of ERP29, but not, or at very low levels, CALR nor CANX. Binds to denatured substrates in an ATP-independent manner. Interacts via the J domain with HSPA5 in an ATP-dependent manner. Post-translationally, contains high-mannose Endo H-sensitive carbohydrates. Cys-169, Cys-171, Cys-193 and Cys-196 form intramolecular disulfide bonds. The preferential partner for each Cys is not known.

It localises to the endoplasmic reticulum lumen. Its function is as follows. As a co-chaperone for HSPA5 it is required for proper folding, trafficking or degradation of proteins. Binds directly to both unfolded proteins that are substrates for ERAD and nascent unfolded peptide chains, but dissociates from the HSPA5-unfolded protein complex before folding is completed. May help recruiting HSPA5 and other chaperones to the substrate. Stimulates HSPA5 ATPase activity. It is necessary for maturation and correct trafficking of PKD1. The polypeptide is DnaJ homolog subfamily B member 11 (DNAJB11) (Bos taurus (Bovine)).